Reading from the N-terminus, the 453-residue chain is Phosphoglucosamine mutase (453 aa).

S110 serves as the catalytic Phosphoserine intermediate. Positions 110, 247, 249, and 251 each coordinate Mg(2+). At S110 the chain carries Phosphoserine.

The protein belongs to the phosphohexose mutase family. The cofactor is Mg(2+). Activated by phosphorylation.

The enzyme catalyses alpha-D-glucosamine 1-phosphate = D-glucosamine 6-phosphate. Catalyzes the conversion of glucosamine-6-phosphate to glucosamine-1-phosphate. The polypeptide is Phosphoglucosamine mutase (Tropheryma whipplei (strain TW08/27) (Whipple's bacillus)).